We begin with the raw amino-acid sequence, 369 residues long: Gibberellin 3-beta-dioxygenase 2-3 (369 aa).

The Fe2OG dioxygenase domain maps to 205 to 306 (MTATMHLNWY…RISLGYFLGP (102 aa)). Fe cation-binding residues include His-229, Asp-231, and His-287. Arg-297 is an active-site residue.

The protein belongs to the iron/ascorbate-dependent oxidoreductase family. GA3OX subfamily. L-ascorbate serves as cofactor. Fe cation is required as a cofactor.

The catalysed reaction is gibberellin A20 + 2-oxoglutarate + O2 = gibberellin A1 + succinate + CO2. In terms of biological role, converts the inactive gibberellin precursors GA9 and GA20 in the bioactives gibberellins GA4 and GA1. The chain is Gibberellin 3-beta-dioxygenase 2-3 (GA3ox2-3) from Triticum aestivum (Wheat).